A 519-amino-acid chain; its full sequence is ATP synthase subunit alpha (519 aa).

Residue 175–182 (GDRQTGKT) participates in ATP binding.

Belongs to the ATPase alpha/beta chains family. In terms of assembly, F-type ATPases have 2 components, CF(1) - the catalytic core - and CF(0) - the membrane proton channel. CF(1) has five subunits: alpha(3), beta(3), gamma(1), delta(1), epsilon(1). CF(0) has three main subunits: a(1), b(2) and c(9-12). The alpha and beta chains form an alternating ring which encloses part of the gamma chain. CF(1) is attached to CF(0) by a central stalk formed by the gamma and epsilon chains, while a peripheral stalk is formed by the delta and b chains.

The protein localises to the cell inner membrane. It carries out the reaction ATP + H2O + 4 H(+)(in) = ADP + phosphate + 5 H(+)(out). Produces ATP from ADP in the presence of a proton gradient across the membrane. The alpha chain is a regulatory subunit. The sequence is that of ATP synthase subunit alpha from Acinetobacter baylyi (strain ATCC 33305 / BD413 / ADP1).